The chain runs to 404 residues: Exodeoxyribonuclease 7 large subunit (404 aa).

This sequence belongs to the XseA family. Heterooligomer composed of large and small subunits.

The protein localises to the cytoplasm. The enzyme catalyses Exonucleolytic cleavage in either 5'- to 3'- or 3'- to 5'-direction to yield nucleoside 5'-phosphates.. Functionally, bidirectionally degrades single-stranded DNA into large acid-insoluble oligonucleotides, which are then degraded further into small acid-soluble oligonucleotides. This Fusobacterium nucleatum subsp. nucleatum (strain ATCC 25586 / DSM 15643 / BCRC 10681 / CIP 101130 / JCM 8532 / KCTC 2640 / LMG 13131 / VPI 4355) protein is Exodeoxyribonuclease 7 large subunit.